A 309-amino-acid chain; its full sequence is Protease HtpX homolog (309 aa).

Helical transmembrane passes span 15 to 35 (NAVL…VDVI) and 54 to 74 (IFPT…VVCI). Histidine 165 lines the Zn(2+) pocket. The active site involves glutamate 166. Histidine 169 is a Zn(2+) binding site. A run of 2 helical transmembrane segments spans residues 181-201 (VGIL…FFMG) and 213-233 (MILL…QMYL). Residue glutamate 238 coordinates Zn(2+).

Belongs to the peptidase M48B family. Zn(2+) is required as a cofactor.

It localises to the cell inner membrane. This chain is Protease HtpX homolog, found in Helicobacter acinonychis (strain Sheeba).